Reading from the N-terminus, the 52-residue chain is Large ribosomal subunit protein bL33A (52 aa).

This sequence belongs to the bacterial ribosomal protein bL33 family.

The chain is Large ribosomal subunit protein bL33A from Staphylococcus aureus (strain USA300).